Here is a 425-residue protein sequence, read N- to C-terminus: Glutamyl-tRNA reductase (425 aa).

Residues 49-52, S107, 112-114, and Q118 contribute to the substrate site; these read TCNR and EPQ. The active-site Nucleophile is the C50. 187–192 provides a ligand contact to NADP(+); the sequence is GAGETI.

This sequence belongs to the glutamyl-tRNA reductase family. Homodimer.

The catalysed reaction is (S)-4-amino-5-oxopentanoate + tRNA(Glu) + NADP(+) = L-glutamyl-tRNA(Glu) + NADPH + H(+). It functions in the pathway porphyrin-containing compound metabolism; protoporphyrin-IX biosynthesis; 5-aminolevulinate from L-glutamyl-tRNA(Glu): step 1/2. Catalyzes the NADPH-dependent reduction of glutamyl-tRNA(Glu) to glutamate 1-semialdehyde (GSA). In Pseudomonas putida (strain ATCC 700007 / DSM 6899 / JCM 31910 / BCRC 17059 / LMG 24140 / F1), this protein is Glutamyl-tRNA reductase.